The primary structure comprises 715 residues: MGTSLYRSTLLSTGGFSVSDYIRKFTKNKPDVNNIQPNVGFCHQSTQTSQQVKEVISAELELQQPEVTLPNDPSSQHSPEAHTGASEPLKPVSAGESSKALQKAKEISVKSSEPTHVQTFAPAVHLEQIDVHNVPKQETNSLVAAPADAKCVIETMTKVEKDIALQQERALERADDSHVANKVFLKSIIPGQQLEKIEDPQQQAEVSLFVDEDSLEKSVPGQHLDKKMEVLQKQAKDLPVVDEDSLNLSAPGQRQLEEKVDVPEKAEKKIDEAHKKMEEVPRKDELCIEKPVIRHAGIKTQHEETMGMETTVPKHDESKCPTETYVEKTENKNADVTLESDKIMICAVSPQNTSLDEDEKSKAAPLRKVESTLLIIDDSPPLPAPFDHRIVSAKQVPINSYYAVNPVEVLGGGRFGQVHKCAELSSGLTLAAKIIKVRGMKERDEVKNEIGVMNQLNHVNLIQLYDAFESRTNLTLIMEYVEGGELFERIIDESYQLTELDAIVFTRQICEGVQYLHQQYILHLDLKPENILCVNSTGNQIKIIDFGLARKYRPREKLKVNFGTPEFLAPEVVNYDFVSFPTDMWSVGVITYMLLSGLSPFMGDNDAETMNNILHAKWEFDTEAFENVSEEAKDFISSLLVSAKCSRLSASGCMKHSWLNNLEDKAKMYKVRLKSQMMLQRYLVAHRQWKKHFYAVAAANRLKRFQQSRSISTPN.

A disordered region spans residues 67 to 114 (VTLPNDPSSQHSPEAHTGASEPLKPVSAGESSKALQKAKEISVKSSEP). Residues 404–659 (VNPVEVLGGG…ASGCMKHSWL (256 aa)) enclose the Protein kinase domain. ATP-binding positions include 410–418 (LGGGRFGQV) and K433. The active-site Proton acceptor is D525.

It belongs to the protein kinase superfamily. CAMK Ser/Thr protein kinase family. Mg(2+) serves as cofactor. Phosphorylated on serine residues.

Its subcellular location is the cytoplasm. It catalyses the reaction L-seryl-[myosin light chain] + ATP = O-phospho-L-seryl-[myosin light chain] + ADP + H(+). The catalysed reaction is L-threonyl-[myosin light chain] + ATP = O-phospho-L-threonyl-[myosin light chain] + ADP + H(+). Functionally, kinase that phosphorylates MYL2 in vitro. Increases cardiomyocyte contractility. Required for sarcomere formation in the developing heart. The sequence is that of Myosin light chain kinase 3 (mylk3) from Danio rerio (Zebrafish).